Reading from the N-terminus, the 98-residue chain is N(2)-fixation sustaining protein CowN (98 aa).

This sequence belongs to the CowN family.

In terms of biological role, is required to sustain N(2)-dependent growth in the presence of low levels of carbon monoxide (CO). Probably acts by protecting the N(2) fixation ability of the nitrogenase complex, which is inactivated in the presence of CO. The polypeptide is N(2)-fixation sustaining protein CowN (Trichlorobacter lovleyi (strain ATCC BAA-1151 / DSM 17278 / SZ) (Geobacter lovleyi)).